The primary structure comprises 240 residues: Dephospho-CoA kinase domain-containing protein (240 aa).

The 205-residue stretch at 3–207 (LVGLTGGIAS…RSMEYLPLRL (205 aa)) folds into the DPCK domain. 8 to 15 (GGIASGKS) contributes to the ATP binding site.

The protein belongs to the CoaE family.

The sequence is that of Dephospho-CoA kinase domain-containing protein (Dcakd) from Rattus norvegicus (Rat).